The following is a 288-amino-acid chain: Phenazine biosynthesis-like domain-containing protein (288 aa).

E46 is an active-site residue.

It belongs to the PhzF family. Interacts with UNRIP/MAWD.

The polypeptide is Phenazine biosynthesis-like domain-containing protein (PBLD) (Bos taurus (Bovine)).